Reading from the N-terminus, the 177-residue chain is Inorganic pyrophosphatase (177 aa).

Substrate is bound by residues Lys-31, Arg-45, and Tyr-57. Positions 67, 72, and 104 each coordinate Mg(2+). Residue Tyr-142 coordinates substrate.

It belongs to the PPase family. Homohexamer. Requires Mg(2+) as cofactor.

Its subcellular location is the cytoplasm. The enzyme catalyses diphosphate + H2O = 2 phosphate + H(+). In terms of biological role, catalyzes the hydrolysis of inorganic pyrophosphate (PPi) forming two phosphate ions. The protein is Inorganic pyrophosphatase of Neisseria meningitidis serogroup B (strain ATCC BAA-335 / MC58).